The following is a 119-amino-acid chain: Ribosome-binding factor A (119 aa).

This sequence belongs to the RbfA family. In terms of assembly, monomer. Binds 30S ribosomal subunits, but not 50S ribosomal subunits or 70S ribosomes.

Its subcellular location is the cytoplasm. In terms of biological role, one of several proteins that assist in the late maturation steps of the functional core of the 30S ribosomal subunit. Associates with free 30S ribosomal subunits (but not with 30S subunits that are part of 70S ribosomes or polysomes). Required for efficient processing of 16S rRNA. May interact with the 5'-terminal helix region of 16S rRNA. This chain is Ribosome-binding factor A, found in Chlorobium phaeovibrioides (strain DSM 265 / 1930) (Prosthecochloris vibrioformis (strain DSM 265)).